The sequence spans 192 residues: Small ribosomal subunit protein uS5 (192 aa).

In terms of domain architecture, S5 DRBM spans F20–V83. The tract at residues S162–A192 is disordered.

The protein belongs to the universal ribosomal protein uS5 family. Part of the 30S ribosomal subunit. Contacts proteins S4 and S8.

Functionally, with S4 and S12 plays an important role in translational accuracy. Its function is as follows. Located at the back of the 30S subunit body where it stabilizes the conformation of the head with respect to the body. This Methylorubrum extorquens (strain CM4 / NCIMB 13688) (Methylobacterium extorquens) protein is Small ribosomal subunit protein uS5.